Reading from the N-terminus, the 1196-residue chain is Major DNA-binding protein (1196 aa).

A zinc finger lies at 499–512 (CNLCTFDTRHACVH). 2 consecutive short sequence motifs (required for filament formation) follow at residues 843 to 844 (FW) and 1142 to 1144 (FNF). Positions 1158–1196 (GGPGAPGPAFAGRKRAFHGDDPFGEGPPDKKGDLTLDML) are disordered. The interval 1170-1196 (RKRAFHGDDPFGEGPPDKKGDLTLDML) is required for nuclear localization. Residues 1174 to 1196 (FHGDDPFGEGPPDKKGDLTLDML) are compositionally biased toward basic and acidic residues.

Belongs to the herpesviridae major DNA-binding protein family. In terms of assembly, homooligomers. Forms double-helical filaments necessary for the formation of replication compartments within the host nucleus. Interacts with the origin-binding protein. Interacts with the helicase primase complex; this interaction stimulates primer synthesis activity of the helicase-primase complex. Interacts with the DNA polymerase. Interacts with the alkaline exonuclease; this interaction increases its nuclease processivity. Interacts with ICP27; this interaction plays a role in the stimulation of late gene transcription.

It localises to the host nucleus. Its function is as follows. Plays several crucial roles in viral infection. Participates in the opening of the viral DNA origin to initiate replication by interacting with the origin-binding protein. May disrupt loops, hairpins and other secondary structures present on ssDNA to reduce and eliminate pausing of viral DNA polymerase at specific sites during elongation. Promotes viral DNA recombination by performing strand-transfer, characterized by the ability to transfer a DNA strand from a linear duplex to a complementary single-stranded DNA circle. Can also catalyze the renaturation of complementary single strands. Additionally, reorganizes the host cell nucleus, leading to the formation of prereplicative sites and replication compartments. This process is driven by the protein which can form double-helical filaments in the absence of DNA. The chain is Major DNA-binding protein from Homo sapiens (Human).